The sequence spans 524 residues: Acetyl-CoA decarbonylase/synthase complex subunit beta (524 aa).

4 residues coordinate [Ni-Fe-S] cluster: C212, C215, C301, and C303. Residues 436–466 (WVEEEEEEAEEVAEEAAAEAAPAAQPAQAAQ) are disordered. Positions 437–452 (VEEEEEEAEEVAEEAA) are enriched in acidic residues. The segment covering 453-466 (AEAAPAAQPAQAAQ) has biased composition (low complexity).

This sequence belongs to the CdhC family. As to quaternary structure, monomer. The ACDS complex is made up of alpha, epsilon, beta, gamma and delta chains with a probable stoichiometry of (alpha(2)epsilon(2))(4)-beta(8)-(gamma(1)delta(1))(8). [Ni-Fe-S] cluster serves as cofactor.

The catalysed reaction is Co(I)-[corrinoid Fe-S protein] + acetyl-CoA + H(+) = methyl-Co(III)-[corrinoid Fe-S protein] + CO + CoA. In terms of biological role, part of a complex that catalyzes the reversible cleavage of acetyl-CoA, allowing autotrophic growth from CO(2). The alpha-epsilon complex generates CO from CO(2), while the beta subunit (this protein) combines the CO with CoA and a methyl group to form acetyl-CoA. The methyl group, which is incorporated into acetyl-CoA, is transferred to the beta subunit by a corrinoid iron-sulfur protein (the gamma-delta complex). In Archaeoglobus fulgidus (strain ATCC 49558 / DSM 4304 / JCM 9628 / NBRC 100126 / VC-16), this protein is Acetyl-CoA decarbonylase/synthase complex subunit beta.